An 841-amino-acid polypeptide reads, in one-letter code: DNA ligase (841 aa).

NAD(+) is bound by residues 33–37 (DAQYD), 82–83 (SL), and Glu114. The active-site N6-AMP-lysine intermediate is the Lys116. The NAD(+) site is built by Arg137, Glu174, Lys300, and Lys324. The Zn(2+) site is built by Cys418, Cys421, Cys436, and Cys442. The BRCT domain maps to 758-841 (EKTGPLDGQT…AFLGEHGQQR (84 aa)).

This sequence belongs to the NAD-dependent DNA ligase family. LigA subfamily. The cofactor is Mg(2+). It depends on Mn(2+) as a cofactor.

The enzyme catalyses NAD(+) + (deoxyribonucleotide)n-3'-hydroxyl + 5'-phospho-(deoxyribonucleotide)m = (deoxyribonucleotide)n+m + AMP + beta-nicotinamide D-nucleotide.. Functionally, DNA ligase that catalyzes the formation of phosphodiester linkages between 5'-phosphoryl and 3'-hydroxyl groups in double-stranded DNA using NAD as a coenzyme and as the energy source for the reaction. It is essential for DNA replication and repair of damaged DNA. The polypeptide is DNA ligase (Xanthomonas oryzae pv. oryzae (strain MAFF 311018)).